We begin with the raw amino-acid sequence, 279 residues long: Proteasome subunit beta 2 (279 aa).

A propeptide spans 1 to 53 (removed in mature form; by autocatalysis); it reads MAAAFDPSGRFPDLFTSVGTSSFSAFLSKAAPELLPGRRPLPPGMATGLTPHA. Thr-54 functions as the Nucleophile in the catalytic mechanism.

Belongs to the peptidase T1B family. In terms of assembly, the 20S proteasome core is composed of 14 alpha and 14 beta subunits that assemble into four stacked heptameric rings, resulting in a barrel-shaped structure. The two inner rings, each composed of seven catalytic beta subunits, are sandwiched by two outer rings, each composed of seven alpha subunits. The catalytic chamber with the active sites is on the inside of the barrel. Has a gated structure, the ends of the cylinder being occluded by the N-termini of the alpha-subunits. Is capped by the proteasome-associated ATPase, ARC.

It localises to the cytoplasm. The catalysed reaction is Cleavage of peptide bonds with very broad specificity.. It participates in protein degradation; proteasomal Pup-dependent pathway. The formation of the proteasomal ATPase ARC-20S proteasome complex, likely via the docking of the C-termini of ARC into the intersubunit pockets in the alpha-rings, may trigger opening of the gate for substrate entry. Interconversion between the open-gate and close-gate conformations leads to a dynamic regulation of the 20S proteasome proteolysis activity. Functionally, component of the proteasome core, a large protease complex with broad specificity involved in protein degradation. This Salinispora tropica (strain ATCC BAA-916 / DSM 44818 / JCM 13857 / NBRC 105044 / CNB-440) protein is Proteasome subunit beta 2.